The primary structure comprises 153 residues: NADH dehydrogenase [ubiquinone] 1 beta subcomplex subunit 11, mitochondrial (153 aa).

A mitochondrion-targeting transit peptide spans 1 to 29; that stretch reads MAAGLFGLSARRLLAAAATRGLPAARVRW. Residues 40–76 are disordered; it reads PSAVAGKRPPEPTTPWQEDPEPEDENLYEKNPDSHGY. The span at 66–76 shows a compositional bias: basic and acidic residues; the sequence is LYEKNPDSHGY. The helical transmembrane segment at 89-109 threads the bilayer; that stretch reads LVFFFGVSIILVLGSTFVAYL.

It belongs to the complex I NDUFB11 subunit family. As to quaternary structure, complex I is composed of 45 different subunits. Interacts with BCAP31. As to expression, ubiquitous.

It localises to the mitochondrion inner membrane. In terms of biological role, accessory subunit of the mitochondrial membrane respiratory chain NADH dehydrogenase (Complex I), that is believed not to be involved in catalysis. Complex I functions in the transfer of electrons from NADH to the respiratory chain. The immediate electron acceptor for the enzyme is believed to be ubiquinone. The polypeptide is NADH dehydrogenase [ubiquinone] 1 beta subcomplex subunit 11, mitochondrial (NDUFB11) (Homo sapiens (Human)).